Reading from the N-terminus, the 260-residue chain is MEIDLNADLGEGYGPWRMGDDEAMMSLISSANIACGFHAGDPLIMDRTVRLAIEGGVDVGAHVGFPDRQGFGRRFMQVDIPDLTAMVTYQLGALAGIARAHGRRVTHMSFHGALGNRAAADPAWATPLLKAIAAFDPNLIISTSSSQAIEGAAAAFGLPVGVSFLADRAYDDQGLLVSRGLPGAVIHDEAQVLARVRRLLTEGTIVTHAGNVLPMQPRSILVHGDTPGAVALTQRLRAEIESLGGRIVPISQQLGFSTVP.

This sequence belongs to the LamB/PxpA family. In terms of assembly, forms a complex composed of PxpA, PxpB and PxpC.

The catalysed reaction is 5-oxo-L-proline + ATP + 2 H2O = L-glutamate + ADP + phosphate + H(+). Its function is as follows. Catalyzes the cleavage of 5-oxoproline to form L-glutamate coupled to the hydrolysis of ATP to ADP and inorganic phosphate. The sequence is that of 5-oxoprolinase subunit A 2 from Ralstonia nicotianae (strain ATCC BAA-1114 / GMI1000) (Ralstonia solanacearum).